A 382-amino-acid polypeptide reads, in one-letter code: Lipid-A-disaccharide synthase (382 aa).

This sequence belongs to the LpxB family.

The enzyme catalyses 2-N,3-O-bis[(3R)-3-hydroxytetradecanoyl]-alpha-D-glucosaminyl 1-phosphate + UDP-2-N,3-O-bis[(3R)-3-hydroxytetradecanoyl]-alpha-D-glucosamine = lipid A disaccharide (E. coli) + UDP + H(+). It carries out the reaction a lipid X + a UDP-2-N,3-O-bis[(3R)-3-hydroxyacyl]-alpha-D-glucosamine = a lipid A disaccharide + UDP + H(+). It participates in glycolipid biosynthesis; lipid IV(A) biosynthesis; lipid IV(A) from (3R)-3-hydroxytetradecanoyl-[acyl-carrier-protein] and UDP-N-acetyl-alpha-D-glucosamine: step 5/6. Condensation of UDP-2,3-diacylglucosamine and 2,3-diacylglucosamine-1-phosphate to form lipid A disaccharide, a precursor of lipid A, a phosphorylated glycolipid that anchors the lipopolysaccharide to the outer membrane of the cell. In Salmonella arizonae (strain ATCC BAA-731 / CDC346-86 / RSK2980), this protein is Lipid-A-disaccharide synthase.